A 184-amino-acid polypeptide reads, in one-letter code: ATP-dependent protease subunit HslV (184 aa).

Thr-8 is an active-site residue. 3 residues coordinate Na(+): Gly-165, Asp-168, and Thr-171.

It belongs to the peptidase T1B family. HslV subfamily. In terms of assembly, a double ring-shaped homohexamer of HslV is capped on each side by a ring-shaped HslU homohexamer. The assembly of the HslU/HslV complex is dependent on binding of ATP.

It is found in the cytoplasm. The enzyme catalyses ATP-dependent cleavage of peptide bonds with broad specificity.. Allosterically activated by HslU binding. Its function is as follows. Protease subunit of a proteasome-like degradation complex believed to be a general protein degrading machinery. The chain is ATP-dependent protease subunit HslV from Pediococcus pentosaceus (strain ATCC 25745 / CCUG 21536 / LMG 10740 / 183-1w).